The sequence spans 271 residues: MTWKKQMALLAKPYYWVNILLAISYLLAKKTQFICTRLFILAGEDEACDLDSREVEILFFLLIVVMIRSRKTGSVTMINYLASSFLYTKVANAILWAYADFRYGLGFLLLCVLVGMVLPEPSYRGPEHITYFRNAQVFEEELARDKRTSWLICFYTVWNPSCVNFAPVFAELSAEYNTDHLKFGKIDIGRFPDVAQKYRISDSSFSRQLPTVILFQQGKETDRRPCVDSKGKLQKFFFSSDNVRATFGLNQLYKEAIERLPIAPKEAKKVQ.

The N-terminal stretch at 1 to 28 (MTWKKQMALLAKPYYWVNILLAISYLLA) is a signal peptide. At 29-102 (KKTQFICTRL…AILWAYADFR (74 aa)) the chain is on the extracellular side. The helical transmembrane segment at 103–123 (YGLGFLLLCVLVGMVLPEPSY) threads the bilayer. The Thioredoxin domain maps to 112–262 (VLVGMVLPEP…YKEAIERLPI (151 aa)). The Cytoplasmic portion of the chain corresponds to 124-271 (RGPEHITYFR…IAPKEAKKVQ (148 aa)). Residues 268 to 271 (KKVQ) carry the Di-lysine motif motif.

Its subcellular location is the membrane. The sequence is that of Thioredoxin-related transmembrane protein 2 homolog from Drosophila melanogaster (Fruit fly).